Here is a 442-residue protein sequence, read N- to C-terminus: tRNA-2-methylthio-N(6)-dimethylallyladenosine synthase (442 aa).

One can recognise an MTTase N-terminal domain in the interval 2–120; that stretch reads KKVFIRTFGC…LPKMIVDKET (119 aa). [4Fe-4S] cluster-binding residues include C11, C49, C83, C157, C161, and C164. A Radical SAM core domain is found at 143 to 375; the sequence is RVEGGAAFVS…NEVIEAETAR (233 aa). The region spanning 378–441 is the TRAM domain; sequence QTMIGTVQRC…TFSLRGKVVE (64 aa).

This sequence belongs to the methylthiotransferase family. MiaB subfamily. Monomer. Requires [4Fe-4S] cluster as cofactor.

Its subcellular location is the cytoplasm. The enzyme catalyses N(6)-dimethylallyladenosine(37) in tRNA + (sulfur carrier)-SH + AH2 + 2 S-adenosyl-L-methionine = 2-methylsulfanyl-N(6)-dimethylallyladenosine(37) in tRNA + (sulfur carrier)-H + 5'-deoxyadenosine + L-methionine + A + S-adenosyl-L-homocysteine + 2 H(+). Functionally, catalyzes the methylthiolation of N6-(dimethylallyl)adenosine (i(6)A), leading to the formation of 2-methylthio-N6-(dimethylallyl)adenosine (ms(2)i(6)A) at position 37 in tRNAs that read codons beginning with uridine. The polypeptide is tRNA-2-methylthio-N(6)-dimethylallyladenosine synthase (Neisseria meningitidis serogroup C / serotype 2a (strain ATCC 700532 / DSM 15464 / FAM18)).